The primary structure comprises 267 residues: Hydrolase FUB4 (267 aa).

Catalysis depends on charge relay system residues Ser93, Asp183, and His243.

It belongs to the AB hydrolase 3 family.

It participates in mycotoxin biosynthesis. Its function is as follows. Hydrolase; part of the gene cluster that mediates the biosynthesis of fusaric acid, a mycotoxin with low to moderate toxicity to animals and humans, but with high phytotoxic properties. L-aspartate is suggested as fusaric acid amino acid precursor that is activated and further processed to O-acetyl-L-homoserine by cluster enzymes aspartate kinase FUB3 and homoserine O-acetyltransferase FUB5, as well as enzymes of the primary metabolism. The polyketide synthase (PKS) FUB1 generates the triketide trans-2-hexenal which is presumptively released by the hydrolase FUB4 and linked to the NRPS-bound amino acid precursor by NAD(P)-dependent dehydrogenase FUB6. FUB1, FUB4, and the non-canonical NRPS Fub8 may form an enzyme complex. Further processing of the NRPS-bound intermediate might be carried out by FUB6 and the sulfhydrylase FUB7, enabling a spontaneous electrocyclization to close the carbon backbone of fusaric acid. Dihydrofusaric acid is likely to be released via reduction by the thioester reductase (TR) domain of FUB8 whereupon the final oxidation to fusaric acid may (also) be performed by the FMN-dependent dehydrogenase FUB9. The polypeptide is Hydrolase FUB4 (Gibberella moniliformis (strain M3125 / FGSC 7600) (Maize ear and stalk rot fungus)).